The chain runs to 343 residues: UDP-N-acetylglucosamine--N-acetylmuramyl-(pentapeptide) pyrophosphoryl-undecaprenol N-acetylglucosamine transferase (343 aa).

Residues 10-12, asparagine 113, serine 174, and glutamine 275 each bind UDP-N-acetyl-alpha-D-glucosamine; that span reads TGG.

It belongs to the glycosyltransferase 28 family. MurG subfamily.

The protein localises to the cell membrane. The enzyme catalyses di-trans,octa-cis-undecaprenyl diphospho-N-acetyl-alpha-D-muramoyl-L-alanyl-D-glutamyl-meso-2,6-diaminopimeloyl-D-alanyl-D-alanine + UDP-N-acetyl-alpha-D-glucosamine = di-trans,octa-cis-undecaprenyl diphospho-[N-acetyl-alpha-D-glucosaminyl-(1-&gt;4)]-N-acetyl-alpha-D-muramoyl-L-alanyl-D-glutamyl-meso-2,6-diaminopimeloyl-D-alanyl-D-alanine + UDP + H(+). The protein operates within cell wall biogenesis; peptidoglycan biosynthesis. Its function is as follows. Cell wall formation. Catalyzes the transfer of a GlcNAc subunit on undecaprenyl-pyrophosphoryl-MurNAc-pentapeptide (lipid intermediate I) to form undecaprenyl-pyrophosphoryl-MurNAc-(pentapeptide)GlcNAc (lipid intermediate II). This is UDP-N-acetylglucosamine--N-acetylmuramyl-(pentapeptide) pyrophosphoryl-undecaprenol N-acetylglucosamine transferase from Wolbachia sp. subsp. Brugia malayi (strain TRS).